A 291-amino-acid chain; its full sequence is 3-hydroxy-5-phosphonooxypentane-2,4-dione thiolase (291 aa).

The active-site Schiff-base intermediate with substrate is K203.

The protein belongs to the DeoC/FbaB aldolase family. Homodecamer.

Its subcellular location is the cytoplasm. It catalyses the reaction dihydroxyacetone phosphate + acetyl-CoA = 3-hydroxy-2,4-dioxopentyl phosphate + CoA. Functionally, involved in the degradation of phospho-AI-2, thereby terminating induction of the lsr operon and closing the AI-2 signaling cycle. Catalyzes the transfer of an acetyl moiety from 3-hydroxy-5-phosphonooxypentane-2,4-dione to CoA to form glycerone phosphate and acetyl-CoA. The chain is 3-hydroxy-5-phosphonooxypentane-2,4-dione thiolase from Escherichia coli O139:H28 (strain E24377A / ETEC).